The following is a 63-amino-acid chain: Conotoxin PnMRCL-0111 (63 aa).

Residues 1-22 (MHCLSVFVILLLLTASAPSVDA) form the signal peptide. Residues 23–50 (QPKTEDDVPLSSFHDDLQRTVRTLLDIR) constitute a propeptide that is removed on maturation. Tryptophan 62 carries the post-translational modification Tryptophan amide.

The protein belongs to the conotoxin T superfamily. Contains 2 disulfide bonds that can be either 'C1-C3, C2-C4' or 'C1-C4, C2-C3', since these disulfide connectivities have been observed for conotoxins with cysteine framework V (for examples, see AC P0DQQ7 and AC P81755). Expressed by the venom duct.

Its subcellular location is the secreted. The sequence is that of Conotoxin PnMRCL-0111 from Conus pennaceus (Feathered cone).